Here is a 244-residue protein sequence, read N- to C-terminus: NAD(P)H-quinone oxidoreductase subunit K (244 aa).

[4Fe-4S] cluster contacts are provided by Cys-60, Cys-61, Cys-125, and Cys-156.

Belongs to the complex I 20 kDa subunit family. As to quaternary structure, NDH-1 can be composed of about 15 different subunits; different subcomplexes with different compositions have been identified which probably have different functions. It depends on [4Fe-4S] cluster as a cofactor.

Its subcellular location is the cellular thylakoid membrane. It carries out the reaction a plastoquinone + NADH + (n+1) H(+)(in) = a plastoquinol + NAD(+) + n H(+)(out). The catalysed reaction is a plastoquinone + NADPH + (n+1) H(+)(in) = a plastoquinol + NADP(+) + n H(+)(out). Functionally, NDH-1 shuttles electrons from an unknown electron donor, via FMN and iron-sulfur (Fe-S) centers, to quinones in the respiratory and/or the photosynthetic chain. The immediate electron acceptor for the enzyme in this species is believed to be plastoquinone. Couples the redox reaction to proton translocation, and thus conserves the redox energy in a proton gradient. Cyanobacterial NDH-1 also plays a role in inorganic carbon-concentration. This chain is NAD(P)H-quinone oxidoreductase subunit K, found in Prochlorococcus marinus (strain MIT 9515).